Reading from the N-terminus, the 373-residue chain is Flagellar P-ring protein 1 (373 aa).

Residues 1–24 (MRGISRLYWSLVLICFAFAPIVEA) form the signal peptide.

It belongs to the FlgI family. The basal body constitutes a major portion of the flagellar organelle and consists of four rings (L,P,S, and M) mounted on a central rod.

Its subcellular location is the periplasm. The protein resides in the bacterial flagellum basal body. In terms of biological role, assembles around the rod to form the L-ring and probably protects the motor/basal body from shearing forces during rotation. The chain is Flagellar P-ring protein 1 from Hahella chejuensis (strain KCTC 2396).